Here is a 230-residue protein sequence, read N- to C-terminus: Potassium/proton antiporter CemA (230 aa).

4 helical membrane passes run 7–27 (LPSF…SFSF), 106–126 (IILH…SFFL), 145–165 (LNDS…VGFH), and 181–201 (LGWA…PVIL).

This sequence belongs to the CemA family.

The protein resides in the plastid. It localises to the chloroplast inner membrane. It catalyses the reaction K(+)(in) + H(+)(out) = K(+)(out) + H(+)(in). Its function is as follows. Contributes to K(+)/H(+) antiport activity by supporting proton efflux to control proton extrusion and homeostasis in chloroplasts in a light-dependent manner to modulate photosynthesis. Prevents excessive induction of non-photochemical quenching (NPQ) under continuous-light conditions. Indirectly promotes efficient inorganic carbon uptake into chloroplasts. The sequence is that of Potassium/proton antiporter CemA from Zea mays (Maize).